We begin with the raw amino-acid sequence, 63 residues long: Glutamine synthetase translation inhibitor (63 aa).

In terms of biological role, inhibits the synthesis of glutamine synthetase II. The polypeptide is Glutamine synthetase translation inhibitor (gstI) (Rhizobium leguminosarum).